Consider the following 230-residue polypeptide: Ion-translocating oxidoreductase complex subunit E (230 aa).

Transmembrane regions (helical) follow at residues 39–59 (LGLGIATLLVLVGSNVTVSLI), 69–89 (IPVFVMIIASLVTCVQLLMNA), 93–113 (GLYLSLGIFIPLIVTNCIIIG), 125–145 (LPAALDGFWMGMGMTTVLVVL), and 182–202 (SFLLALLPPGAFIGVGLLIAL).

Belongs to the NqrDE/RnfAE family. In terms of assembly, the complex is composed of six subunits: RnfA, RnfB, RnfC, RnfD, RnfE and RnfG.

It localises to the cell inner membrane. Functionally, part of a membrane-bound complex that couples electron transfer with translocation of ions across the membrane. The protein is Ion-translocating oxidoreductase complex subunit E of Vibrio vulnificus (strain YJ016).